A 96-amino-acid polypeptide reads, in one-letter code: Putative pterin-4-alpha-carbinolamine dehydratase (96 aa).

The protein belongs to the pterin-4-alpha-carbinolamine dehydratase family.

It carries out the reaction (4aS,6R)-4a-hydroxy-L-erythro-5,6,7,8-tetrahydrobiopterin = (6R)-L-erythro-6,7-dihydrobiopterin + H2O. The polypeptide is Putative pterin-4-alpha-carbinolamine dehydratase (Synechocystis sp. (strain ATCC 27184 / PCC 6803 / Kazusa)).